Consider the following 632-residue polypeptide: 1-deoxy-D-xylulose-5-phosphate synthase (632 aa).

Thiamine diphosphate contacts are provided by residues H79 and 120–122 (GHA). D151 is a Mg(2+) binding site. Thiamine diphosphate is bound by residues 152 to 153 (GS), N180, F292, and E376. A Mg(2+)-binding site is contributed by N180.

The protein belongs to the transketolase family. DXPS subfamily. As to quaternary structure, homodimer. Mg(2+) serves as cofactor. The cofactor is thiamine diphosphate.

The enzyme catalyses D-glyceraldehyde 3-phosphate + pyruvate + H(+) = 1-deoxy-D-xylulose 5-phosphate + CO2. The protein operates within metabolic intermediate biosynthesis; 1-deoxy-D-xylulose 5-phosphate biosynthesis; 1-deoxy-D-xylulose 5-phosphate from D-glyceraldehyde 3-phosphate and pyruvate: step 1/1. In terms of biological role, catalyzes the acyloin condensation reaction between C atoms 2 and 3 of pyruvate and glyceraldehyde 3-phosphate to yield 1-deoxy-D-xylulose-5-phosphate (DXP). This is 1-deoxy-D-xylulose-5-phosphate synthase from Azobacteroides pseudotrichonymphae genomovar. CFP2.